The chain runs to 380 residues: Lipid-A-disaccharide synthase (380 aa).

This sequence belongs to the LpxB family.

It carries out the reaction a lipid X + a UDP-2-N,3-O-bis[(3R)-3-hydroxyacyl]-alpha-D-glucosamine = a lipid A disaccharide + UDP + H(+). Its pathway is bacterial outer membrane biogenesis; LPS lipid A biosynthesis. Its function is as follows. Condensation of UDP-2,3-diacylglucosamine and 2,3-diacylglucosamine-1-phosphate to form lipid A disaccharide, a precursor of lipid A, a phosphorylated glycolipid that anchors the lipopolysaccharide to the outer membrane of the cell. This Rickettsia typhi (strain ATCC VR-144 / Wilmington) protein is Lipid-A-disaccharide synthase.